A 728-amino-acid chain; its full sequence is MSTTSRREPPDLAALLRKKKEEEAAAAKPRFIPKKERERLEAEKKAKEEEERKRKEEAKPQPNGTNHNGNRMDGIQSHHNHNPQRNIPTGPKAMRYDDDRGPNGMSNGRDYRDNRDNRDNRDRNQRGAKRGAPNDDEEKRAKMERNDEAELRARYMGPVVNQSTFSAKKKRRRTAANKFNFDWDADDDTSRPFDPIYAERQEPLVRLGGYEMTEEMVMRKAEAIRRGDPETGEERARQYLEQHRRIKEMEQRKNLGKHWSEKKLEDMKERDWRIFKENFGIATKGGAIPNPMRSWEESTLPRRLLDIVKNVGYDEPTPIQRAAIPIALQARDLIGVAVTGSGKTAAFLLPLLVYISELPPLTEYNKNDGPYALILAPTRELVQQIESEAKKFATPLGFTVVSIVGGHSLEEQAFALRNGAEIIVATPGRLVDCLERRLLVFSQCCYTIMDEADRMIDQGFEEPLTKILDAMPVTNEKPDTDDAENPQLMSRYVDGKDRYRQTMMYTATMPPIVERIAKKYLRRPAIVTIGNAGEAVDTVEQRVEFVSGEDKRKKRLQEILNSGQFKPPIIVFVNIKRNCDMVARDIKGMGYSAVTLHGSKTQEQREAALASLRNGQTDILVATDLAGRGIDVPDVSLVVNFNMATNIESYTHRIGRTGRAGKSGVAITFLGPEDNDVLYDLRQIISKSSISKVPDELRRHEAAQNKPQKGQKKLEESNGYSGKGGSWN.

The tract at residues 19–155 is disordered; it reads KKEEEAAAAK…NDEAELRARY (137 aa). Composition is skewed to basic and acidic residues over residues 33–59, 109–125, and 137–153; these read PKKE…EEAK, RDYR…DRNQ, and EEKR…ELRA. Positions 293–321 match the Q motif motif; sequence RSWEESTLPRRLLDIVKNVGYDEPTPIQR. One can recognise a Helicase ATP-binding domain in the interval 324-527; sequence IPIALQARDL…KKYLRRPAIV (204 aa). Residue 337–344 coordinates ATP; sequence AVTGSGKT. The DEAD box motif lies at 450–453; sequence DEAD. The Helicase C-terminal domain occupies 538 to 701; the sequence is TVEQRVEFVS…KVPDELRRHE (164 aa). The tract at residues 692-728 is disordered; sequence KVPDELRRHEAAQNKPQKGQKKLEESNGYSGKGGSWN. Positions 693-703 are enriched in basic and acidic residues; it reads VPDELRRHEAA.

Belongs to the DEAD box helicase family. DDX23/PRP28 subfamily. In terms of assembly, component of the U5 snRNP complex.

It is found in the cytoplasm. The protein resides in the nucleus. It catalyses the reaction ATP + H2O = ADP + phosphate + H(+). Functionally, ATP-dependent RNA helicase involved in mRNA splicing. May destabilize the U1/5'-splice site duplex to permit an effective competition for the 5'-splice site by the U6 snRNA, resulting in the switch between U1 and U6 at the 5'-splice site. May also act to unwind the U4/U6 base-pairing interaction in the U4/U6/U5 snRNP, facilitating the first covalent step of splicing. This is Pre-mRNA-splicing ATP-dependent RNA helicase prp-28 (prp-28) from Neurospora crassa (strain ATCC 24698 / 74-OR23-1A / CBS 708.71 / DSM 1257 / FGSC 987).